We begin with the raw amino-acid sequence, 713 residues long: Putative ERAD-associated E3 ubiquitin-protein ligase component (713 aa).

A signal peptide spans 1-20 (MQLLNFLICLFFIFKRCVFT). N-linked (GlcNAc...) asparagine glycosylation is found at Asn-48 and Asn-123. 2 Sel1-like repeats span residues 83-124 (PESQ…TQNY) and 125-160 (TYAL…HQIS). A glycan (N-linked (GlcNAc...) asparagine) is linked at Asn-211. 4 Sel1-like repeats span residues 212-248 (ISAH…RLVN), 280-315 (SIAA…SLNH), 490-525 (IHSL…AIHP), and 527-562 (ALAY…MHDT). N-linked (GlcNAc...) asparagine glycosylation occurs at Asn-314. Residues 621-655 (QLPPEPPTLQVDRTPQQPDPQETSESLPSPNTEEM) form a disordered region. Over residues 631–652 (VDRTPQQPDPQETSESLPSPNT) the composition is skewed to polar residues. A helical membrane pass occupies residues 671-691 (GRFLETACVTLIVVVVGLVLM).

It belongs to the sel-1 family.

The protein localises to the endoplasmic reticulum membrane. In terms of biological role, component of the endoplasmic reticulum quality control (ERQC) system involved in ubiquitin-dependent degradation of missfolded endoplasmic reticulum proteins. The polypeptide is Putative ERAD-associated E3 ubiquitin-protein ligase component (Schizosaccharomyces pombe (strain 972 / ATCC 24843) (Fission yeast)).